The sequence spans 156 residues: ATP synthase subunit b', organellar chromatophore (156 aa).

A helical membrane pass occupies residues 23-43 (TLPLMAIQVVFLTFILNAIFF).

Belongs to the ATPase B chain family. F-type ATPases have 2 components, F(1) - the catalytic core - and F(0) - the membrane proton channel. F(1) has five subunits: alpha(3), beta(3), gamma(1), delta(1), epsilon(1). F(0) has four main subunits: a(1), b(1), b'(1) and c(10-14). The alpha and beta chains form an alternating ring which encloses part of the gamma chain. F(1) is attached to F(0) by a central stalk formed by the gamma and epsilon chains, while a peripheral stalk is formed by the delta, b and b' chains.

It localises to the plastid. Its subcellular location is the organellar chromatophore thylakoid membrane. F(1)F(0) ATP synthase produces ATP from ADP in the presence of a proton or sodium gradient. F-type ATPases consist of two structural domains, F(1) containing the extramembraneous catalytic core and F(0) containing the membrane proton channel, linked together by a central stalk and a peripheral stalk. During catalysis, ATP synthesis in the catalytic domain of F(1) is coupled via a rotary mechanism of the central stalk subunits to proton translocation. Its function is as follows. Component of the F(0) channel, it forms part of the peripheral stalk, linking F(1) to F(0). The b'-subunit is a diverged and duplicated form of b found in plants and photosynthetic bacteria. This chain is ATP synthase subunit b', organellar chromatophore, found in Paulinella chromatophora.